A 50-amino-acid chain; its full sequence is Peptide encoded by miPEP319a (50 aa).

Regulatory peptide encoded by the primary transcript (pri-miR319a) of the microRNA miR319a that enhances the accumulation of its corresponding mature miRNA. Acts probably as a transcriptional activator of its corresponding pri-miRNA. The protein is Peptide encoded by miPEP319a of Arabidopsis thaliana (Mouse-ear cress).